A 962-amino-acid chain; its full sequence is Glycine dehydrogenase (decarboxylating) (962 aa).

K709 is subject to N6-(pyridoxal phosphate)lysine.

This sequence belongs to the GcvP family. In terms of assembly, the glycine cleavage system is composed of four proteins: P, T, L and H. The cofactor is pyridoxal 5'-phosphate.

The catalysed reaction is N(6)-[(R)-lipoyl]-L-lysyl-[glycine-cleavage complex H protein] + glycine + H(+) = N(6)-[(R)-S(8)-aminomethyldihydrolipoyl]-L-lysyl-[glycine-cleavage complex H protein] + CO2. Its function is as follows. The glycine cleavage system catalyzes the degradation of glycine. The P protein binds the alpha-amino group of glycine through its pyridoxal phosphate cofactor; CO(2) is released and the remaining methylamine moiety is then transferred to the lipoamide cofactor of the H protein. The protein is Glycine dehydrogenase (decarboxylating) of Shewanella frigidimarina (strain NCIMB 400).